Reading from the N-terminus, the 459-residue chain is Argininosuccinate lyase (459 aa).

Belongs to the lyase 1 family. Argininosuccinate lyase subfamily.

Its subcellular location is the cytoplasm. The catalysed reaction is 2-(N(omega)-L-arginino)succinate = fumarate + L-arginine. It participates in amino-acid biosynthesis; L-arginine biosynthesis; L-arginine from L-ornithine and carbamoyl phosphate: step 3/3. In Geobacillus sp. (strain WCH70), this protein is Argininosuccinate lyase.